A 440-amino-acid chain; its full sequence is C4-dicarboxylate transport protein (440 aa).

A run of 9 helical transmembrane segments spans residues 15–35 (VLVA…TGVA), 46–66 (LIKM…IAGM), 78–98 (YALL…LVVV), 146–166 (AFAN…GFAL), 190–210 (IINM…AFTI), 224–244 (LMAC…GGIC), 291–311 (VVGL…SIYL), 332–352 (ITLL…TGSG), and 354–374 (IVLA…LALI). The disordered stretch occupies residues 419 to 440 (GGSPLVDTRPTDDLGVAEGPAR).

It belongs to the dicarboxylate/amino acid:cation symporter (DAACS) (TC 2.A.23) family.

It localises to the cell inner membrane. Functionally, responsible for the transport of dicarboxylates such as succinate, fumarate, and malate from the periplasm across the membrane. The protein is C4-dicarboxylate transport protein of Pseudomonas entomophila (strain L48).